The chain runs to 130 residues: Small ribosomal subunit protein uS8 (130 aa).

This sequence belongs to the universal ribosomal protein uS8 family. Part of the 30S ribosomal subunit. Contacts proteins S5 and S12.

In terms of biological role, one of the primary rRNA binding proteins, it binds directly to 16S rRNA central domain where it helps coordinate assembly of the platform of the 30S subunit. This is Small ribosomal subunit protein uS8 from Pseudomonas aeruginosa (strain UCBPP-PA14).